A 618-amino-acid polypeptide reads, in one-letter code: UvrABC system protein C (618 aa).

The GIY-YIG domain maps to 19–97 (SEPGIYRMLD…IKALRPKYNV (79 aa)). The UVR domain maps to 208 to 243 (QIILDELAERMKNAVSQLNFEEAAVLRDQIKNLRLI).

It belongs to the UvrC family. Interacts with UvrB in an incision complex.

It is found in the cytoplasm. Its function is as follows. The UvrABC repair system catalyzes the recognition and processing of DNA lesions. UvrC both incises the 5' and 3' sides of the lesion. The N-terminal half is responsible for the 3' incision and the C-terminal half is responsible for the 5' incision. In Legionella pneumophila (strain Lens), this protein is UvrABC system protein C.